Consider the following 419-residue polypeptide: UPF0761 membrane protein ACIAD3168 (419 aa).

6 helical membrane passes run 42–62, 105–125, 148–168, 186–206, 212–232, and 252–272; these read ALTY…LVII, LTVI…STIE, WTII…SSTV, AFIL…ILYW, TVPM…FELL, and AFAA…IVLL.

Belongs to the UPF0761 family.

It is found in the cell inner membrane. The polypeptide is UPF0761 membrane protein ACIAD3168 (Acinetobacter baylyi (strain ATCC 33305 / BD413 / ADP1)).